A 374-amino-acid polypeptide reads, in one-letter code: MNALFIIIFMIVVGAIIGGITNVIAIRMLFHPFKPYYIFKFRVPFTPGLIPKRREEIATKIGQVIEEHLLTETLINEKLKSEQSQQAIESMIQQQLQKLTKDQLSIKQITSQIDIDLEQVLQTNGNQYIESQLNNYYTKHQNQTIASLLPNQLVTFLDQHVDNATDLLCDRARNYLSSAKGTQDINDMLDTFFHEKGKLIGMLQMFMTKESIADRIQQELIRLTSHPKARTIVTSLITNEYQTFKDKPLNELLDASQFNEIAENLSVYVTTYASNQANKPVVTLMPQFVDYLEGQLSSKLANLIIEKLSIHLSTIMKKVDLRGLIEEQINTFDLDYIEKLIIEIANKELKLIMSLGFILGGIIGFFQGLVAIFV.

2 consecutive transmembrane segments (helical) span residues 4-24 and 354-374; these read LFIIIFMIVVGAIIGGITNVI and SLGFILGGIIGFFQGLVAIFV.

Belongs to the UPF0754 family.

The protein localises to the cell membrane. This Staphylococcus aureus (strain N315) protein is UPF0754 membrane protein SA1664.